Consider the following 581-residue polypeptide: Pre-mRNA 3'-end-processing factor FIP1 (581 aa).

Composition is skewed to basic and acidic residues over residues 1–10 (MSAGEVERLV) and 32–42 (VHVHSDLAKDL). 3 disordered regions span residues 1-95 (MSAG…EDDV), 211-282 (TVQQ…ESPD), and 320-581 (RSAT…APAE). The sufficient for interaction with PAPOLA stretch occupies residues 1 to 110 (MSAGEVERLV…DIKTGAPQYG (110 aa)). The segment at 1–332 (MSAGEVERLV…TEVDNNFSKP (332 aa)) is necessary for stimulating PAPOLA activity. Acidic residues-rich tracts occupy residues 43–54 (DENEVERPEEEN) and 80–94 (TEDDSDSDSDDDEDD). Phosphoserine occurs at positions 84, 86, and 88. Residues 136-219 (KGVDLDAPGS…ITVQQGRTGN (84 aa)) are sufficient for interaction with CPSF4. Residues 247–267 (SRNSTSSQSQTSTASRKASSS) are compositionally biased toward low complexity. The span at 271–282 (WQDRYGRAESPD) shows a compositional bias: basic and acidic residues. Ser280 bears the Phosphoserine mark. A compositionally biased stretch (polar residues) spans 320-330 (RSATEVDNNFS). Residues 331–389 (KPPPFFPPGAPPTHLPPPPFLPPPPTVSTAPPLIPPPGIPITVPPPGFPPPPGAPPPSL) show a composition bias toward pro residues. Tyr411 is subject to Phosphotyrosine. Polar residues predominate over residues 419–435 (LTSSAPSWPSLVDTTKQ). Residues 428-581 (SLVDTTKQWD…QESTEAAPAE (154 aa)) form a sufficient for interaction with CPSF1 and CSTF3 region. Positions 439-479 (YARREKDRDRDRERDRDRERERDRDRERERTRERERERDHS) are enriched in basic and acidic residues. Residues 442–477 (REKDRDRDRERDRDRERERDRDRERERTRERERERD) are arg/Asp/Glu-rich domain. Residues 478-535 (HSPTPSVFNSDEERYRYREYAERGYERHRASREKEERHRERRHREKEETRHKSSRSNS) form a sufficient for interaction with AHCYL1 region. Ser479 carries the phosphoserine modification. Residue Thr481 is modified to Phosphothreonine. Residues Ser483 and Ser487 each carry the phosphoserine modification. Residues 488–515 (DEERYRYREYAERGYERHRASREKEERH) show a composition bias toward basic and acidic residues. A compositionally biased stretch (basic residues) spans 529 to 538 (KSSRSNSRRR). Ser541 is modified (phosphoserine). Residues 547–557 (HRRHKHKKSKR) are compositionally biased toward basic residues.

It belongs to the FIP1 family. In terms of assembly, component of the cleavage and polyadenylation specificity factor (CPSF) complex, composed of CPSF1, CPSF2, CPSF3, CPSF4 and FIP1L1. Found in a complex with CPSF1, FIP1L1 and PAPOLA. Interacts with CPSF1, CPSF4, CSTF2 and CSTF3. Interacts with AHCYL1 (when phosphorylated); the interaction is direct and associates AHCYL1 with the CPSF complex and RNA. Interacts with PAPOLA; the interaction seems to be increased by the interaction with AHCYL1. Interacts with NUDT21/CPSF5; this interaction occurs in a RNA sequence-specific manner. Interacts (preferentially via unphosphorylated form and Arg/Glu/Asp-rich domain) with CPSF6 (via Arg/Ser-rich domain); this interaction mediates, at least in part, the interaction between the CFIm and CPSF complexes and may be inhibited by CPSF6 hyper-phosphorylation. Interacts (preferentially via unphosphorylated form and Arg/Asp/Glu-rich domain) with CPSF7 (via Arg/Ser-rich domain); this interaction mediates, at least in part, the interaction between the CFIm and CPSF complexes and may be inhibited by CPSF7 hyper-phosphorylation.

Its subcellular location is the nucleus. In terms of biological role, component of the cleavage and polyadenylation specificity factor (CPSF) complex that plays a key role in pre-mRNA 3'-end formation, recognizing the AAUAAA signal sequence and interacting with poly(A) polymerase and other factors to bring about cleavage and poly(A) addition. FIP1L1 contributes to poly(A) site recognition and stimulates poly(A) addition. Binds to U-rich RNA sequence elements surrounding the poly(A) site. May act to tether poly(A) polymerase to the CPSF complex. This Mus musculus (Mouse) protein is Pre-mRNA 3'-end-processing factor FIP1 (Fip1l1).